Reading from the N-terminus, the 248-residue chain is MRLLVSNDDGVYAPGIKALAEALKTIAHVDVVAPDRNCSAASNSLTLTNPLRINRLDNGYIAVNGTPSDCVHIAIREICTEEPELVVSGINAGANMGDDTLYSGTVAAAMEGRFQGLPAIAVSLSARTPVHYDAAAQIALRIVEGLKAHPLPADQILNVNVPDLPLEEIKGIKVTRLGARHRAEGVVRTTDPAGREIFWLGPPGEELDASEGTDFGAVAEGYVSITPLTVDLTAHSQLNALANWIEKI.

The a divalent metal cation site is built by Asp8, Asp9, Ser39, and Asn91.

It belongs to the SurE nucleotidase family. It depends on a divalent metal cation as a cofactor.

It localises to the cytoplasm. The catalysed reaction is a ribonucleoside 5'-phosphate + H2O = a ribonucleoside + phosphate. Functionally, nucleotidase that shows phosphatase activity on nucleoside 5'-monophosphates. The sequence is that of 5'-nucleotidase SurE from Shewanella amazonensis (strain ATCC BAA-1098 / SB2B).